A 481-amino-acid chain; its full sequence is Keratin, type II cuticular Hb1 (481 aa).

Residues 1 to 106 (MTCGSGFCGR…PNAQCVKHEE (106 aa)) form a head region. An IF rod domain is found at 106-417 (EKEQIKCLNS…RLLEGEEQRL (312 aa)). Residues 107–141 (KEQIKCLNSKFAAFIDKVRFLEQQNKLLETKWQFY) form a coil 1A region. Residues 142-151 (QNRKCCESNM) are linker 1. A coil 1B region spans residues 152 to 252 (EPLFEGYIEA…YDEETRILHS (101 aa)). A Glycyl lysine isopeptide (Lys-Gly) (interchain with G-Cter in SUMO1) cross-link involves residue K212. The linker 12 stretch occupies residues 253–269 (HISDTSIVVKMDNSRDL). The segment at 270–413 (NMDCVVAEIK…TTYRRLLEGE (144 aa)) is coil 2. The segment at 414-481 (EQRLCEGVGA…GSAVSCGRKC (68 aa)) is tail.

The protein belongs to the intermediate filament family. As to quaternary structure, heterotetramer of two type I and two type II keratins. In terms of tissue distribution, expressed in dorsal skin.

The chain is Keratin, type II cuticular Hb1 from Mus musculus (Mouse).